The sequence spans 973 residues: Splicing regulator ARVCF (973 aa).

A disordered region spans residues 95–123; that stretch reads VTVEEDPGTPTSHVSIVTSEDGTTRRTET. 2 positions are modified to phosphothreonine: threonine 103 and threonine 105. Residues 103 to 115 show a composition bias toward polar residues; it reads TPTSHVSIVTSED. Arginine 171 carries the omega-N-methylarginine modification. 2 disordered regions span residues 233-254 and 267-331; these read RREAFPMGSESGPPSGRSLPEH and RSLA…QPER. A Phosphoserine modification is found at serine 268. Residues 271-281 show a composition bias toward acidic residues; that stretch reads ADDEGGPDLEP. The segment covering 289–303 has biased composition (basic and acidic residues); the sequence is RRPEYGRGLRARALE. Residues serine 333, serine 336, serine 344, and serine 346 each carry the phosphoserine modification. ARM repeat units lie at residues 349 to 388, 391 to 430, 434 to 468, 469 to 509, 527 to 566, and 576 to 623; these read STRKEPRWRDPELPEVLAMLRHPVDPVKANAAAYLQHLCF, EGIKRRVRQLRGLPLLVALLDHPRAEVRRRACGALRNLSY, ADNKAAIRDCGGVPALVRLLRAARDNEVRELVTGT, LWNL…NEDS, LRNVSSDGAEARRRLRECEGLVDALLHALQSAVGRKDTDN, and MRNL…GKKA. A disordered region spans residues 593-623; it reads YQEVEPGIPGSAATSQRRRKDDASCFGGKKA. Serine 607 carries the post-translational modification Phosphoserine. The Nuclear localization signal motif lies at 608–624; sequence QRRRKDDASCFGGKKAK. Threonine 637 carries the phosphothreonine modification. ARM repeat units lie at residues 641–681, 694–733, 734–776, and 777–821; these read PKRT…AAGA, TYIRATVRKERGLPVLVELLQSETDKVVRAVAIALRNLSL, DQRN…AVLN, and TIHE…SHVL. Positions 771 to 955 are required for interaction with RNA-binding proteins DDX5, HNRNPH2 and SRSF1 and with mRNAs; the sequence is VVAVLNTIHE…VLGPGAPPFC (185 aa). Residues 844–926 form a disordered region; the sequence is FQSASTAKGP…KELLKGPGPA (83 aa). At serine 865 the chain carries Phosphoserine. The residue at position 866 (threonine 866) is a Phosphothreonine. Residues 872 to 881 are compositionally biased toward basic and acidic residues; that stretch reads KNLDGEKSTT.

The protein belongs to the beta-catenin family. As to quaternary structure, component of a ribonucleoprotein complex containing mRNAs and RNA-binding proteins including DDX5, HNRNPH2 and SRSF1 as well as ARVCF. Interacts (via the extreme C-terminus) with FRMPD2 (via the PDZ 2 domain). Interacts with CCDC85B. In terms of tissue distribution, expressed in optic nerve sheath envelope (at protein level). Expressed in heart (at protein level).

Its subcellular location is the cell junction. It is found in the adherens junction. The protein localises to the nucleus. The protein resides in the cytoplasm. Its function is as follows. Contributes to the regulation of alternative splicing of pre-mRNAs. This Rattus norvegicus (Rat) protein is Splicing regulator ARVCF.